We begin with the raw amino-acid sequence, 409 residues long: O-glucosyltransferase rumi (409 aa).

Residues 1-20 (MLINVVLIILLVGLNGKASG) form the signal peptide. Cystine bridges form between cysteine 62–cysteine 73, cysteine 71–cysteine 376, cysteine 118–cysteine 124, and cysteine 280–cysteine 303. Aspartate 149 functions as the Proton donor/acceptor in the catalytic mechanism. Residues 190–195 (ATKLHP) are interaction with the consensus sequence C-X-S-X-[PA]-C in peptide substrates. UDP-alpha-D-glucose contacts are provided by residues 227–231 (RGSRT), arginine 235, 274–276 (VSF), and 292–296 (AASFR). Residues 406 to 409 (KDEL) carry the Prevents secretion from ER motif.

This sequence belongs to the glycosyltransferase 90 family.

It localises to the endoplasmic reticulum lumen. It participates in protein modification; protein glycosylation. Functionally, protein O-glucosyltransferase. Catalyzes the reaction that attaches glucose through an O-glycosidic linkage to a conserved serine residue found in the consensus sequence C-X-S-X-[PA]-C in epidermal growth factor-like repeats. Regulates Notch signaling by glucosylating Notch in the ER, glucosylation is required for the correct folding and cleavage of Notch. This chain is O-glucosyltransferase rumi, found in Drosophila pseudoobscura pseudoobscura (Fruit fly).